The following is a 123-amino-acid chain: DNA-directed RNA polymerase subunit omega (123 aa).

Residues 67 to 123 form a disordered region; the sequence is EESAADSLSLGGFSTADVEAEVGGGPVQPDPGASQERAFDEAADGTAQGSGDPDPTT.

Belongs to the RNA polymerase subunit omega family. The RNAP catalytic core consists of 2 alpha, 1 beta, 1 beta' and 1 omega subunit. When a sigma factor is associated with the core the holoenzyme is formed, which can initiate transcription.

The catalysed reaction is RNA(n) + a ribonucleoside 5'-triphosphate = RNA(n+1) + diphosphate. In terms of biological role, promotes RNA polymerase assembly. Latches the N- and C-terminal regions of the beta' subunit thereby facilitating its interaction with the beta and alpha subunits. In Halorhodospira halophila (strain DSM 244 / SL1) (Ectothiorhodospira halophila (strain DSM 244 / SL1)), this protein is DNA-directed RNA polymerase subunit omega.